Reading from the N-terminus, the 623-residue chain is Keratin, type I cytoskeletal 9 (623 aa).

Low complexity predominate over residues 1 to 13 (MSCRQFSSSYLSR). The interval 1–25 (MSCRQFSSSYLSRSGGGGGGGLGSG) is disordered. Positions 1–152 (MSCRQFSSSY…GGDGGILTAN (152 aa)) are head. Phosphoserine occurs at positions 14 and 57. Gly residues predominate over residues 14 to 25 (SGGGGGGGLGSG). The coil 1A stretch occupies residues 153-188 (EKSTMQELNSRLASYLDKVQALEEANNDLENKIQDW). The 313-residue stretch at 153–465 (EKSTMQELNS…NLLEGGQEDF (313 aa)) folds into the IF rod domain. Residues 189-207 (YDKKGPAAIQKNYSPYYNT) are linker 1. Residues 208–299 (IDDLKDQIVD…KNHKEEMSQL (92 aa)) form a coil 1B region. Positions 300 to 322 (TGQNSGDVNVEINVAPGKDLTKT) are linker 12. The tract at residues 323 to 461 (LNDMRQEYEQ…ETYHNLLEGG (139 aa)) is coil 2. Disordered regions lie at residues 462–496 (QEDFESSGAGKIGLGGRGGSGGSYGRGSRGGSGGS) and 534–623 (YGGG…SSHS). Residues 462-623 (QEDFESSGAG…GGGSGKSSHS (162 aa)) are tail. Gly residues predominate over residues 471–496 (GKIGLGGRGGSGGSYGRGSRGGSGGS).

The protein belongs to the intermediate filament family. Heterotetramer of two type I and two type II keratins. As to expression, expressed in the terminally differentiated epidermis of palms and soles.

Its function is as follows. May serve an important special function either in the mature palmar and plantar skin tissue or in the morphogenetic program of the formation of these tissues. Plays a role in keratin filament assembly. In Homo sapiens (Human), this protein is Keratin, type I cytoskeletal 9 (KRT9).